The following is a 126-amino-acid chain: Phosphoribosyl-AMP cyclohydrolase (126 aa).

Asp73 contacts Mg(2+). Cys74 contacts Zn(2+). Mg(2+) is bound by residues Asp75 and Asp77. Residues Cys91 and Cys98 each contribute to the Zn(2+) site.

Belongs to the PRA-CH family. In terms of assembly, homodimer. Mg(2+) is required as a cofactor. It depends on Zn(2+) as a cofactor.

The protein localises to the cytoplasm. It catalyses the reaction 1-(5-phospho-beta-D-ribosyl)-5'-AMP + H2O = 1-(5-phospho-beta-D-ribosyl)-5-[(5-phospho-beta-D-ribosylamino)methylideneamino]imidazole-4-carboxamide. The protein operates within amino-acid biosynthesis; L-histidine biosynthesis; L-histidine from 5-phospho-alpha-D-ribose 1-diphosphate: step 3/9. Catalyzes the hydrolysis of the adenine ring of phosphoribosyl-AMP. This chain is Phosphoribosyl-AMP cyclohydrolase, found in Solibacter usitatus (strain Ellin6076).